Here is a 159-residue protein sequence, read N- to C-terminus: Ribosomal RNA large subunit methyltransferase H (159 aa).

Residues Leu76, Gly108, and 127-132 each bind S-adenosyl-L-methionine; that span reads FSKMTF.

The protein belongs to the RNA methyltransferase RlmH family. As to quaternary structure, homodimer.

It is found in the cytoplasm. The catalysed reaction is pseudouridine(1915) in 23S rRNA + S-adenosyl-L-methionine = N(3)-methylpseudouridine(1915) in 23S rRNA + S-adenosyl-L-homocysteine + H(+). Its function is as follows. Specifically methylates the pseudouridine at position 1915 (m3Psi1915) in 23S rRNA. This Geobacillus kaustophilus (strain HTA426) protein is Ribosomal RNA large subunit methyltransferase H.